The following is a 154-amino-acid chain: S-ribosylhomocysteine lyase (154 aa).

Positions 57, 61, and 124 each coordinate Fe cation.

Belongs to the LuxS family. In terms of assembly, homodimer. Requires Fe cation as cofactor.

The enzyme catalyses S-(5-deoxy-D-ribos-5-yl)-L-homocysteine = (S)-4,5-dihydroxypentane-2,3-dione + L-homocysteine. Involved in the synthesis of autoinducer 2 (AI-2) which is secreted by bacteria and is used to communicate both the cell density and the metabolic potential of the environment. The regulation of gene expression in response to changes in cell density is called quorum sensing. Catalyzes the transformation of S-ribosylhomocysteine (RHC) to homocysteine (HC) and 4,5-dihydroxy-2,3-pentadione (DPD). The sequence is that of S-ribosylhomocysteine lyase from Exiguobacterium sibiricum (strain DSM 17290 / CCUG 55495 / CIP 109462 / JCM 13490 / 255-15).